The following is a 476-amino-acid chain: Tryptophan--tRNA ligase, cytoplasmic (476 aa).

The dispensable to the catalytic activity stretch occupies residues methionine 1 to isoleucine 117. One can recognise a WHEP-TRS domain in the interval serine 13–proline 69. The disordered stretch occupies residues tyrosine 63–threonine 83. At lysine 159 the chain carries N6-succinyllysine. The 'HIGH' region signature appears at proline 169–histidine 178. The short motif at lysine 354–serine 358 is the 'KMSKS' region element. Serine 356 carries the post-translational modification Phosphoserine.

The protein belongs to the class-I aminoacyl-tRNA synthetase family. In terms of assembly, homodimer. Interacts with oxidized form of GAPDH. Post-translationally, proteolytic cleavage generates 2 forms; T1-TrpRS and T2-TrpRS.

The protein resides in the cytoplasm. The catalysed reaction is tRNA(Trp) + L-tryptophan + ATP = L-tryptophyl-tRNA(Trp) + AMP + diphosphate + H(+). In terms of biological role, T1-TrpRS has aminoacylation activity while T2-TrpRS lacks it. T1-TrpRS and T2-TrpRS possess angiostatic activity. T2-TrpRS inhibits fluid shear stress-activated responses of endothelial cells. Regulates ERK, Akt, and eNOS activation pathways that are associated with angiogenesis, cytoskeletal reorganization and shear stress-responsive gene expression. In Bos taurus (Bovine), this protein is Tryptophan--tRNA ligase, cytoplasmic (WARS1).